The sequence spans 57 residues: Large ribosomal subunit protein bL32c (57 aa).

The segment at Met1–Lys21 is disordered.

It belongs to the bacterial ribosomal protein bL32 family.

Its subcellular location is the plastid. It localises to the chloroplast. This chain is Large ribosomal subunit protein bL32c, found in Stigeoclonium helveticum (Green alga).